Reading from the N-terminus, the 282-residue chain is Urease accessory protein UreD (282 aa).

This sequence belongs to the UreD family. In terms of assembly, ureD, UreF and UreG form a complex that acts as a GTP-hydrolysis-dependent molecular chaperone, activating the urease apoprotein by helping to assemble the nickel containing metallocenter of UreC. The UreE protein probably delivers the nickel.

The protein localises to the cytoplasm. Its function is as follows. Required for maturation of urease via the functional incorporation of the urease nickel metallocenter. The sequence is that of Urease accessory protein UreD from Methylobacterium sp. (strain 4-46).